The sequence spans 353 residues: N-acetyl-gamma-glutamyl-phosphate reductase (353 aa).

The active site involves cysteine 157.

It belongs to the NAGSA dehydrogenase family. Type 1 subfamily.

It is found in the cytoplasm. The catalysed reaction is N-acetyl-L-glutamate 5-semialdehyde + phosphate + NADP(+) = N-acetyl-L-glutamyl 5-phosphate + NADPH + H(+). Its pathway is amino-acid biosynthesis; L-arginine biosynthesis; N(2)-acetyl-L-ornithine from L-glutamate: step 3/4. Its function is as follows. Catalyzes the NADPH-dependent reduction of N-acetyl-5-glutamyl phosphate to yield N-acetyl-L-glutamate 5-semialdehyde. In Bordetella avium (strain 197N), this protein is N-acetyl-gamma-glutamyl-phosphate reductase.